The following is a 114-amino-acid chain: MAKKGGFPGMGGVNMNNMMKQVQKMQKQMEETQAQLEQKVLETSAGGGAVSIKITGKKEIVGISIKPEVVDPDDVEMLEDLIMAAMNEAIRAADDMMSSEMGKITGKMNMPGLF.

The protein belongs to the YbaB/EbfC family. In terms of assembly, homodimer.

The protein localises to the cytoplasm. It is found in the nucleoid. Binds to DNA and alters its conformation. May be involved in regulation of gene expression, nucleoid organization and DNA protection. The protein is Nucleoid-associated protein Clos_2855 of Alkaliphilus oremlandii (strain OhILAs) (Clostridium oremlandii (strain OhILAs)).